The primary structure comprises 405 residues: Transcriptional regulatory protein DEP1 (405 aa).

A compositionally biased stretch (low complexity) spans 1–12 (MSQQTPQESEQT). 2 disordered regions span residues 1-26 (MSQQ…SVLS) and 49-171 (AGTE…VMPS). Serine 56 bears the Phosphoserine mark. 2 stretches are compositionally biased toward basic and acidic residues: residues 86-108 (SLKR…KVPG) and 116-139 (EEEK…ARDE). At serine 120 the chain carries Phosphoserine. Positions 140 to 157 (QGDEGDNEEENNEEDNEN) are enriched in acidic residues. Serine 370 is subject to Phosphoserine.

As to quaternary structure, component of the RPD3C(L) complex composed of at least ASH1, CTI6, DEP1, PHO23, RPD3, RXT2, RXT3, SAP30, SDS3, SIN3, UME1 and UME6.

It localises to the cytoplasm. It is found in the nucleus. Component of the RPD3C(L) histone deacetylase complex (HDAC) responsible for the deacetylation of lysine residues on the N-terminal part of the core histones (H2A, H2B, H3 and H4). Histone deacetylation gives a tag for epigenetic repression and plays an important role in transcriptional regulation, cell cycle progression and developmental events. This chain is Transcriptional regulatory protein DEP1 (DEP1), found in Saccharomyces cerevisiae (strain ATCC 204508 / S288c) (Baker's yeast).